The sequence spans 441 residues: Glutamate--tRNA ligase 1 (441 aa).

Residues 8-18 (PSPTGHIHVGN) carry the 'HIGH' region motif. The 'KMSKS' region signature appears at 239–243 (ELSKR). K242 lines the ATP pocket.

This sequence belongs to the class-I aminoacyl-tRNA synthetase family. Glutamate--tRNA ligase type 1 subfamily. In terms of assembly, monomer.

The protein localises to the cytoplasm. It carries out the reaction tRNA(Glu) + L-glutamate + ATP = L-glutamyl-tRNA(Glu) + AMP + diphosphate. In terms of biological role, catalyzes the attachment of glutamate to tRNA(Glu) in a two-step reaction: glutamate is first activated by ATP to form Glu-AMP and then transferred to the acceptor end of tRNA(Glu). This chain is Glutamate--tRNA ligase 1, found in Paracoccus denitrificans (strain Pd 1222).